The sequence spans 433 residues: V-type ATP synthase beta chain (433 aa).

Belongs to the ATPase alpha/beta chains family.

Its function is as follows. Produces ATP from ADP in the presence of a proton gradient across the membrane. The V-type beta chain is a regulatory subunit. The sequence is that of V-type ATP synthase beta chain from Borrelia turicatae (strain 91E135).